We begin with the raw amino-acid sequence, 170 residues long: Small ribosomal subunit protein uS9 (170 aa).

It belongs to the universal ribosomal protein uS9 family.

This chain is Small ribosomal subunit protein uS9, found in Rhodococcus opacus (strain B4).